A 103-amino-acid polypeptide reads, in one-letter code: Co-chaperonin GroES (103 aa).

It belongs to the GroES chaperonin family. Heptamer of 7 subunits arranged in a ring. Interacts with the chaperonin GroEL.

Its subcellular location is the cytoplasm. Its function is as follows. Together with the chaperonin GroEL, plays an essential role in assisting protein folding. The GroEL-GroES system forms a nano-cage that allows encapsulation of the non-native substrate proteins and provides a physical environment optimized to promote and accelerate protein folding. GroES binds to the apical surface of the GroEL ring, thereby capping the opening of the GroEL channel. The chain is Co-chaperonin GroES from Synechococcus sp. (strain JA-3-3Ab) (Cyanobacteria bacterium Yellowstone A-Prime).